The primary structure comprises 355 residues: Probable aldo-keto reductase 3 (355 aa).

The active-site Proton donor is Tyr70. His138 lines the substrate pocket. 217-227 (SPLGRGFFSSG) is a binding site for NADP(+).

It belongs to the aldo/keto reductase family.

The polypeptide is Probable aldo-keto reductase 3 (Oryza sativa subsp. indica (Rice)).